The sequence spans 350 residues: MKKSVKVVLGIETSCDETAVAIVNSNKEVLSHKILSQKEHAEYGGVVPEIASRAHINYLYDLTVSCIEESQLSLNNIDAVAVTSGPGLIGGLIVGVMIAKGIASVTGKPIIEINHLEAHALIVRMFYEINFPFLLLIISGGHCQFLIVYNVGCYHKLGSSLDDSLGEVFDKVAKMLNLGYPGGPVIEKKSLSGDSKSFVLPRALTGRCGCDFSFSGLKTAVRNIIMNHEYIDNKLICDISASFQECVGDILVNRINNAIAMSKAIDKRIDKLVVTGGVAANKLLRERMLRCASDNNFEIFYPPSKLCTDNGIMIGWAGIENLVKDYVSNLDFAPKARWPLESLRSNIMKE.

Fe cation-binding residues include histidine 115 and histidine 119. Substrate-binding positions include 137 to 141 (IISGG), aspartate 170, glycine 183, and asparagine 281. Aspartate 309 serves as a coordination point for Fe cation.

This sequence belongs to the KAE1 / TsaD family. The cofactor is Fe(2+).

It is found in the cytoplasm. The enzyme catalyses L-threonylcarbamoyladenylate + adenosine(37) in tRNA = N(6)-L-threonylcarbamoyladenosine(37) in tRNA + AMP + H(+). Required for the formation of a threonylcarbamoyl group on adenosine at position 37 (t(6)A37) in tRNAs that read codons beginning with adenine. Is involved in the transfer of the threonylcarbamoyl moiety of threonylcarbamoyl-AMP (TC-AMP) to the N6 group of A37, together with TsaE and TsaB. TsaD likely plays a direct catalytic role in this reaction. The sequence is that of tRNA N6-adenosine threonylcarbamoyltransferase from Ehrlichia canis (strain Jake).